Consider the following 304-residue polypeptide: Phospholipase A1 (304 aa).

C6 and C90 are disulfide-bonded. N-linked (GlcNAc...) asparagine glycosylation occurs at N61. The active-site Nucleophile is the S140. The active-site Charge relay system is D168. 2 disulfides stabilise this stretch: C179-C184 and C222-C231. Residue H233 is the Charge relay system of the active site. 3 disulfide bridges follow: C248/C272, C249/C297, and C265/C270.

Belongs to the AB hydrolase superfamily. Lipase family. In terms of tissue distribution, expressed by the venom gland.

The protein localises to the secreted. The catalysed reaction is a 1,2-diacyl-sn-glycero-3-phosphocholine + H2O = a 2-acyl-sn-glycero-3-phosphocholine + a fatty acid + H(+). Functionally, catalyzes the hydrolysis of phosphatidylcholine with phospholipase A1 activity. May act as an allergen and induce hemolytic activity. The polypeptide is Phospholipase A1 (Vespa velutina (Asian yellow-legged hornet)).